The chain runs to 47 residues: PhoP/PhoQ regulator MgrB (47 aa).

Residues 6–26 traverse the membrane as a helical segment; it reads WVILIIVLIACVILWTQTINV.

This sequence belongs to the MgrB family. In terms of assembly, may form homooligomers. Probably interacts with the periplasmic domain of PhoQ.

It is found in the cell inner membrane. PhoP-regulated transcription is redox-sensitive, being activated when the periplasm becomes more reducing. MgrB acts between DsbA/DsbB and PhoP/PhoQ in this pathway. Represses PhoP/PhoQ signaling, possibly by binding to the periplasmic domain of PhoQ, altering its activity and that of downstream effector PhoP. The protein is PhoP/PhoQ regulator MgrB of Enterobacter sp. (strain 638).